A 227-amino-acid polypeptide reads, in one-letter code: MSIAVETFGFFMSALGLLMLGVTLPNSYWRVSTVHGNVITTNTIFENLWYSCATDSLGVSNCWDFPSMLALSGYVQGCRALMITAILLGFLGLFLGMVGLRCTNVGNIDLSRKAKLLAIAGAFHILAGACGMVAISWYAVNITTDFFNPLYVGTKYELGSALYLGWSASLLSILGGICVFSTCCCDSKEDPATRVGLPYKPSTVVTARATSDESDVSFGKYGKNAYV.

Met-1 is a topological domain (cytoplasmic). The helical transmembrane segment at 2-24 (SIAVETFGFFMSALGLLMLGVTL) threads the bilayer. At 25–74 (PNSYWRVSTVHGNVITTNTIFENLWYSCATDSLGVSNCWDFPSMLALSGY) the chain is on the extracellular side. Cys-52 and Cys-62 are oxidised to a cystine. The chain crosses the membrane as a helical span at residues 75–99 (VQGCRALMITAILLGFLGLFLGMVG). Topologically, residues 100-115 (LRCTNVGNIDLSRKAK) are cytoplasmic. The residue at position 111 (Ser-111) is a Phosphoserine. The chain crosses the membrane as a helical span at residues 116-140 (LLAIAGAFHILAGACGMVAISWYAV). Over 141 to 159 (NITTDFFNPLYVGTKYELG) the chain is Extracellular. Residues 146 to 147 (FF) are important for the formation of tight-junction strand-like structures. Residues 160–182 (SALYLGWSASLLSILGGICVFST) traverse the membrane as a helical segment. Residues 183–227 (CCCDSKEDPATRVGLPYKPSTVVTARATSDESDVSFGKYGKNAYV) lie on the Cytoplasmic side of the membrane. A phosphoserine mark is found at Ser-211, Ser-214, and Ser-217.

This sequence belongs to the claudin family. In terms of assembly, can form homo- and heteropolymeric tight junction strands. Palmitoylated. Detected in kidney, jejunum and colon (at protein level).

It localises to the cell junction. It is found in the tight junction. Its subcellular location is the cell membrane. It catalyses the reaction Na(+)(in) = Na(+)(out). The catalysed reaction is K(+)(in) = K(+)(out). The enzyme catalyses Cs(+)(in) = Cs(+)(out). It carries out the reaction Rb(+)(in) = Rb(+)(out). It catalyses the reaction Li(+)(in) = Li(+)(out). The catalysed reaction is NH4(+)(in) = NH4(+)(out). The enzyme catalyses methylamine(out) = methylamine(in). It carries out the reaction H2O(in) = H2O(out). In terms of biological role, forms paracellular channels: polymerizes in tight junction strands with cation- and water-selective channels through the strands, conveying epithelial permeability in a process known as paracellular tight junction permeability. In intestinal epithelium, allows for sodium and water fluxes from the peritoneal side to the lumen of the intestine to regulate nutrient absorption and intestinal morphogenesis. The polypeptide is Claudin-15 (Rattus norvegicus (Rat)).